Consider the following 55-residue polypeptide: Large ribosomal subunit protein bL33 (55 aa).

This sequence belongs to the bacterial ribosomal protein bL33 family.

The protein is Large ribosomal subunit protein bL33 of Enterobacter sp. (strain 638).